The following is a 351-amino-acid chain: Protein Tex24 (351 aa).

3 disordered regions span residues 69–101 (PSTAHGKRKPGHLPRLRSSAVKGHAPDPNPSLS), 117–144 (PEDRQTFVGPSGLPKISPKATAGEAQGK), and 275–298 (EKVKPSSHDMHLSTAERSFKPKSM). Basic residues predominate over residues 73–83 (HGKRKPGHLPR). Over residues 275–285 (EKVKPSSHDMH) the composition is skewed to basic and acidic residues.

Specific to testis, where it is expressed in spermatogonia.

The protein localises to the nucleus. Functionally, nuclear factor which might have a role in spermatogenesis. In Mus musculus (Mouse), this protein is Protein Tex24.